Reading from the N-terminus, the 62-residue chain is uncharacterized protein (62 aa).

Positions 1-22 (MVNVALLLDQIIATPLRSMVEA) are cleaved as a signal peptide.

This is an uncharacterized protein from Archaeoglobus fulgidus (strain ATCC 49558 / DSM 4304 / JCM 9628 / NBRC 100126 / VC-16).